A 538-amino-acid chain; its full sequence is Acetylcholine receptor subunit alpha-type acr-7 (538 aa).

The N-terminal stretch at 1–27 is a signal peptide; sequence MMVQSIQIVLPVALFFLIVFNGFTVEG. Over 28–250 the chain is Extracellular; that stretch reads SKKEAQLYRD…LHLRRRTFYY (223 aa). N41 and N101 each carry an N-linked (GlcNAc...) asparagine glycan. Cystine bridges form between C160-C174 and C229-C230. A run of 3 helical transmembrane segments spans residues 251-271, 280-300, and 313-333; these read VFNV…AFCL, IGLQ…LSEM, and VFFS…ILVL. Over 334–513 the chain is Cytoplasmic; it reads NIRYRQITNH…FAAQAVDRFC (180 aa). A helical membrane pass occupies residues 514-534; the sequence is LIIFTIVFIICCFIFVAIPPI.

This sequence belongs to the ligand-gated ion channel (TC 1.A.9) family. Acetylcholine receptor (TC 1.A.9.1) subfamily. Forms a homooligomeric channel blocked by alpha-bungarotoxin. The structure is probably pentameric.

Its subcellular location is the postsynaptic cell membrane. The protein resides in the cell membrane. Its function is as follows. After binding acetylcholine, the AChR responds by an extensive change in conformation that affects all subunits and leads to opening of an ion-conducting channel across the plasma membrane. This Caenorhabditis elegans protein is Acetylcholine receptor subunit alpha-type acr-7 (acr-7).